Reading from the N-terminus, the 320-residue chain is Sensor histidine kinase YbdK (320 aa).

Residues methionine 1–methionine 21 traverse the membrane as a helical segment. At serine 22 to serine 41 the chain is on the extracellular side. A helical membrane pass occupies residues phenylalanine 42–phenylalanine 62. Residues serine 63–glutamate 320 lie on the Cytoplasmic side of the membrane. One can recognise an HAMP domain in the interval histidine 67–leucine 120. The 186-residue stretch at lysine 135–glutamate 320 folds into the Histidine kinase domain. Histidine 138 carries the phosphohistidine; by autocatalysis modification.

Its subcellular location is the cell membrane. It catalyses the reaction ATP + protein L-histidine = ADP + protein N-phospho-L-histidine.. Member of the two-component regulatory system YbdK/YbdJ. Probably activates YbdJ by phosphorylation. In Bacillus subtilis (strain 168), this protein is Sensor histidine kinase YbdK (ybdK).